Here is a 485-residue protein sequence, read N- to C-terminus: Proline betaine:corrinoid methyltransferase (485 aa).

Belongs to the trimethylamine methyltransferase family. The proline betaine:THF methyl transfer system is composed of two methyltransferases, MtpB and MtqA, and the corrinoid protein MtqC.

The catalysed reaction is Co(I)-[quaternary-amine-specific corrinoid protein] + L-proline betaine + H(+) = methyl-Co(III)-[quaternary-amine-specific corrinoid protein] + N-methyl-L-proline. Functionally, involved in the degradation of the quaternary amine L-proline betaine. Component of a corrinoid-dependent methyltransferase system that transfers a methyl group from L-proline betaine to tetrahydrofolate (THF), forming methyl-THF, a key intermediate in the Wood-Ljungdahl acetogenesis pathway. MtpB catalyzes the methylation of the corrinoid protein MtqC, using L-proline betaine as the methyl donor. Shows weak activity with some other quaternary amines, including carnitine, phosphocholine, glycine betaine or betonicine, but cannot methylate free cob(I)alamin. The chain is Proline betaine:corrinoid methyltransferase from Eubacterium limosum.